A 165-amino-acid polypeptide reads, in one-letter code: Phosphopantetheine adenylyltransferase (165 aa).

Thr9 provides a ligand contact to substrate. ATP-binding positions include 9-10 and His17; that span reads TF. Residues Lys41, Leu73, and Arg87 each coordinate substrate. ATP contacts are provided by residues 88 to 90, Glu98, and 123 to 129; these read GLR and YQFISGT.

This sequence belongs to the bacterial CoaD family. Homohexamer. It depends on Mg(2+) as a cofactor.

The protein resides in the cytoplasm. The enzyme catalyses (R)-4'-phosphopantetheine + ATP + H(+) = 3'-dephospho-CoA + diphosphate. The protein operates within cofactor biosynthesis; coenzyme A biosynthesis; CoA from (R)-pantothenate: step 4/5. Its function is as follows. Reversibly transfers an adenylyl group from ATP to 4'-phosphopantetheine, yielding dephospho-CoA (dPCoA) and pyrophosphate. This Burkholderia vietnamiensis (strain G4 / LMG 22486) (Burkholderia cepacia (strain R1808)) protein is Phosphopantetheine adenylyltransferase.